The chain runs to 552 residues: Glutamine-dependent NAD(+) synthetase (552 aa).

The region spanning 5-245 (FRITLAQLNP…EAVVHVDLER (241 aa)) is the CN hydrolase domain. The active-site Proton acceptor; for glutaminase activity is the E45. The For glutaminase activity role is filled by K113. C149 acts as the Nucleophile; for glutaminase activity in catalysis. L-glutamine-binding residues include S175 and K181. Residues 275–552 (LQDYLRKSGF…PMVNRWRDQS (278 aa)) form a ligase region. 290–297 (GLSGGIDS) is a binding site for ATP. N373 is a binding site for deamido-NAD(+). T397 lines the ATP pocket. Deamido-NAD(+)-binding residues include E402 and K521.

In the C-terminal section; belongs to the NAD synthetase family.

It carries out the reaction deamido-NAD(+) + L-glutamine + ATP + H2O = L-glutamate + AMP + diphosphate + NAD(+) + H(+). It functions in the pathway cofactor biosynthesis; NAD(+) biosynthesis; NAD(+) from deamido-NAD(+) (L-Gln route): step 1/1. Functionally, catalyzes the ATP-dependent amidation of deamido-NAD to form NAD. Uses L-glutamine as a nitrogen source. This chain is Glutamine-dependent NAD(+) synthetase, found in Rhodobacter capsulatus (Rhodopseudomonas capsulata).